Consider the following 150-residue polypeptide: Dual specificity protein phosphatase 23 (150 aa).

Residues 7-150 (NFSWVLPGRL…AVFQFYQRTK (144 aa)) enclose the Tyrosine-protein phosphatase domain. The Phosphocysteine intermediate role is filled by cysteine 95.

Belongs to the protein-tyrosine phosphatase family. Non-receptor class dual specificity subfamily. Widely expressed. Highly expressed in spleen, prostate, colon, adrenal gland, mammary gland, thyroid and trachea. Expressed at lower level in uterus, small intestine, bladder, bone marrow, brain, spinal cord and stomach.

The protein localises to the cytoplasm. It is found in the cytosol. It localises to the nucleus. It carries out the reaction O-phospho-L-tyrosyl-[protein] + H2O = L-tyrosyl-[protein] + phosphate. The enzyme catalyses O-phospho-L-seryl-[protein] + H2O = L-seryl-[protein] + phosphate. It catalyses the reaction O-phospho-L-threonyl-[protein] + H2O = L-threonyl-[protein] + phosphate. Its function is as follows. Protein phosphatase that mediates dephosphorylation of proteins phosphorylated on Tyr and Ser/Thr residues. In vitro, it can dephosphorylate p44-ERK1 (MAPK3) but not p54 SAPK-beta (MAPK10) in vitro. Able to enhance activation of JNK and p38 (MAPK14). The protein is Dual specificity protein phosphatase 23 (DUSP23) of Homo sapiens (Human).